Reading from the N-terminus, the 218-residue chain is Adenylate kinase (218 aa).

An ATP-binding site is contributed by 10 to 15; the sequence is GAGKGT. Residues 30–59 form an NMP region; the sequence is STGDMLRAAVKAATPLGLAAKKIMDEGGLV. AMP contacts are provided by residues Thr-31, Arg-36, 57–59, 85–88, and Gln-92; these read GLV and GFPR. The segment at 122-159 is LID; it reads GRRVHLASGRTYHVTFNPPAVPDKDDLTGEPLVQRNDD. ATP is bound by residues Arg-123 and 132–133; that span reads TY. Arg-156 and Arg-167 together coordinate AMP. Gly-203 contacts ATP.

The protein belongs to the adenylate kinase family. Monomer.

The protein localises to the cytoplasm. It carries out the reaction AMP + ATP = 2 ADP. The protein operates within purine metabolism; AMP biosynthesis via salvage pathway; AMP from ADP: step 1/1. Catalyzes the reversible transfer of the terminal phosphate group between ATP and AMP. Plays an important role in cellular energy homeostasis and in adenine nucleotide metabolism. In Chlorobaculum tepidum (strain ATCC 49652 / DSM 12025 / NBRC 103806 / TLS) (Chlorobium tepidum), this protein is Adenylate kinase.